The chain runs to 360 residues: Zinc finger protein ztf-2 (360 aa).

The disordered stretch occupies residues 19-41 (LSSPEKEHRRKRRRGEVANPSNT). 3 C2H2-type zinc fingers span residues 87 to 109 (RTCSTCGYQGKWVSEMIRHKRVH), 115 to 138 (FKCRYCSRTSKWKADLIRHVAKTH), and 180 to 203 (YRCQLCSFEDERVSVLNSHVSHLH). Residues 248–260 (PLSPCRSESSSDS) are compositionally biased toward low complexity. Residues 248 to 272 (PLSPCRSESSSDSGIQTDPEEEASI) are disordered.

As to expression, expressed in pharyngeal epithelium/arcade, which connects the pharynx to the mouth.

Its function is as follows. Transcription factor. Represses gene expression, probably via binding to DNA consensus sequence 5'-[AT][CT]TTCC[AC][AG]-3' in promoter regions. May play a role in pharynx morphogenesis. The protein is Zinc finger protein ztf-2 of Caenorhabditis elegans.